The primary structure comprises 422 residues: PHAF1 protein T01G9.2 (422 aa).

Belongs to the PHAF1 family.

It is found in the cytoplasm. The protein localises to the preautophagosomal structure. May play a regulatory role in autophagic activity. This chain is PHAF1 protein T01G9.2, found in Caenorhabditis elegans.